We begin with the raw amino-acid sequence, 141 residues long: Large ribosomal subunit protein uL11 (141 aa).

It belongs to the universal ribosomal protein uL11 family. In terms of assembly, part of the ribosomal stalk of the 50S ribosomal subunit. Interacts with L10 and the large rRNA to form the base of the stalk. L10 forms an elongated spine to which L12 dimers bind in a sequential fashion forming a multimeric L10(L12)X complex. Post-translationally, one or more lysine residues are methylated.

Its function is as follows. Forms part of the ribosomal stalk which helps the ribosome interact with GTP-bound translation factors. The sequence is that of Large ribosomal subunit protein uL11 from Ruminiclostridium cellulolyticum (strain ATCC 35319 / DSM 5812 / JCM 6584 / H10) (Clostridium cellulolyticum).